The chain runs to 275 residues: Phosphatidylglycerol--prolipoprotein diacylglyceryl transferase (275 aa).

The next 4 helical transmembrane spans lie at 20-40 (FTIH…LLLA), 58-78 (LLWA…VFQW), 88-108 (IIAI…GFIV), and 118-138 (LSSW…QGIG). Residue Arg139 coordinates a 1,2-diacyl-sn-glycero-3-phospho-(1'-sn-glycerol). The next 2 membrane-spanning stretches (helical) occupy residues 209–229 (GEIF…IEGM) and 239–259 (IRIS…ILII).

It belongs to the Lgt family.

Its subcellular location is the cell membrane. The catalysed reaction is L-cysteinyl-[prolipoprotein] + a 1,2-diacyl-sn-glycero-3-phospho-(1'-sn-glycerol) = an S-1,2-diacyl-sn-glyceryl-L-cysteinyl-[prolipoprotein] + sn-glycerol 1-phosphate + H(+). The protein operates within protein modification; lipoprotein biosynthesis (diacylglyceryl transfer). Functionally, catalyzes the transfer of the diacylglyceryl group from phosphatidylglycerol to the sulfhydryl group of the N-terminal cysteine of a prolipoprotein, the first step in the formation of mature lipoproteins. This chain is Phosphatidylglycerol--prolipoprotein diacylglyceryl transferase, found in Limosilactobacillus reuteri (strain DSM 20016) (Lactobacillus reuteri).